Reading from the N-terminus, the 102-residue chain is MDKVMRMSSEKGVVIFTKSSCCLCYAVQILFRDLRVQPTIHEIDNDPDCREIEKALVRLGCANAVPAVFVSGKLVGSTNDVMSLHLSGSLVPLIKPYQSFHN.

The 101-residue stretch at 1 to 101 (MDKVMRMSSE…PLIKPYQSFH (101 aa)) folds into the Glutaredoxin domain. The cysteines at positions 21 and 24 are disulfide-linked.

It belongs to the glutaredoxin family. CC-type subfamily.

Its subcellular location is the cytoplasm. Its function is as follows. Has a glutathione-disulfide oxidoreductase activity in the presence of NADPH and glutathione reductase. Reduces low molecular weight disulfides and proteins. The chain is Glutaredoxin-C14 (GRXC14) from Arabidopsis thaliana (Mouse-ear cress).